Consider the following 280-residue polypeptide: Undecaprenyl-diphosphatase (280 aa).

Transmembrane regions (helical) follow at residues 1-21, 40-60, 89-109, 116-136, 146-166, 191-211, 227-247, and 260-280; these read MEWI…FLPI, GAAF…VFFW, WLVV…QNAI, LWIV…ADAV, LTVK…IPGV, FLLA…KIVA, LATV…LKFI, and IALG…ATLS.

It belongs to the UppP family.

The protein localises to the cell membrane. It catalyses the reaction di-trans,octa-cis-undecaprenyl diphosphate + H2O = di-trans,octa-cis-undecaprenyl phosphate + phosphate + H(+). Catalyzes the dephosphorylation of undecaprenyl diphosphate (UPP). Confers resistance to bacitracin. This is Undecaprenyl-diphosphatase from Renibacterium salmoninarum (strain ATCC 33209 / DSM 20767 / JCM 11484 / NBRC 15589 / NCIMB 2235).